Reading from the N-terminus, the 235-residue chain is Cytidylate kinase (235 aa).

ATP is bound at residue 16 to 24 (GPAASGKST).

Belongs to the cytidylate kinase family. Type 1 subfamily.

It localises to the cytoplasm. It catalyses the reaction CMP + ATP = CDP + ADP. It carries out the reaction dCMP + ATP = dCDP + ADP. In Chlorobaculum tepidum (strain ATCC 49652 / DSM 12025 / NBRC 103806 / TLS) (Chlorobium tepidum), this protein is Cytidylate kinase.